Consider the following 230-residue polypeptide: Thymidylate kinase (230 aa).

20 to 27 (GGEGAGKS) contacts ATP.

The protein belongs to the thymidylate kinase family.

The enzyme catalyses dTMP + ATP = dTDP + ADP. Functionally, phosphorylation of dTMP to form dTDP in both de novo and salvage pathways of dTTP synthesis. This chain is Thymidylate kinase, found in Rhodopseudomonas palustris (strain BisB18).